Here is a 313-residue protein sequence, read N- to C-terminus: Porphobilinogen deaminase (313 aa).

Position 242 is an S-(dipyrrolylmethanemethyl)cysteine (C242).

The protein belongs to the HMBS family. In terms of assembly, monomer. It depends on dipyrromethane as a cofactor.

It carries out the reaction 4 porphobilinogen + H2O = hydroxymethylbilane + 4 NH4(+). It functions in the pathway porphyrin-containing compound metabolism; protoporphyrin-IX biosynthesis; coproporphyrinogen-III from 5-aminolevulinate: step 2/4. Its function is as follows. Tetrapolymerization of the monopyrrole PBG into the hydroxymethylbilane pre-uroporphyrinogen in several discrete steps. This Yersinia pseudotuberculosis serotype IB (strain PB1/+) protein is Porphobilinogen deaminase.